Consider the following 714-residue polypeptide: Calpain-1 catalytic subunit (714 aa).

Positions 55 to 354 constitute a Calpain catalytic domain; the sequence is LFRDEAFPPV…FTRLEICNLT (300 aa). Residues Gln-109 and Asp-114 each coordinate Ca(2+). Catalysis depends on residues Cys-115, His-272, and Asn-296. Residues Ser-316, Asp-318, and Glu-323 each contribute to the Ca(2+) site. Thr-354 bears the Phosphothreonine mark. The segment at 355-526 is domain III; that stretch reads PDALKSRTIR…KSAGTAELDD (172 aa). The segment at 527–542 is linker; the sequence is QIQANLPDEQVLSEEE. EF-hand domains follow at residues 541-576, 585-618, 615-650, and 680-714; these read EEID…IISK, FSLE…NRIR, NRIR…AGFK, and VRLE…TMFA. Residues 543–713 form a domain IV region; it reads IDENFKALFR…LFKWLQLTMF (171 aa). Positions 598, 600, 602, 604, 609, 628, 630, 632, 634, and 639 each coordinate Ca(2+).

The protein belongs to the peptidase C2 family. In terms of assembly, forms a heterodimer with a small (regulatory) subunit (CAPNS1). The cofactor is Ca(2+). Post-translationally, undergoes calcium-induced successive autoproteolytic cleavages that generate a membrane-bound 78 kDa active form and an intracellular 75 kDa active form. Calpastatin reduces with high efficiency the transition from 78 kDa to 75 kDa calpain forms. As to expression, ubiquitous.

Its subcellular location is the cytoplasm. The protein resides in the cell membrane. The enzyme catalyses Broad endopeptidase specificity.. Activated by micromolar concentrations of calcium and inhibited by calpastatin. Functionally, calcium-regulated non-lysosomal thiol-protease which catalyze limited proteolysis of substrates involved in cytoskeletal remodeling and signal transduction. Proteolytically cleaves CTBP1. Cleaves and activates caspase-7 (CASP7). This is Calpain-1 catalytic subunit (CAPN1) from Macaca fascicularis (Crab-eating macaque).